The primary structure comprises 424 residues: Serine--tRNA ligase (424 aa).

230 to 232 (TAE) lines the L-serine pocket. 261–263 (RAE) is a binding site for ATP. E284 provides a ligand contact to L-serine. Position 348-351 (348-351 (EISS)) interacts with ATP. S384 contacts L-serine.

This sequence belongs to the class-II aminoacyl-tRNA synthetase family. Type-1 seryl-tRNA synthetase subfamily. In terms of assembly, homodimer. The tRNA molecule binds across the dimer.

The protein resides in the cytoplasm. It catalyses the reaction tRNA(Ser) + L-serine + ATP = L-seryl-tRNA(Ser) + AMP + diphosphate + H(+). The enzyme catalyses tRNA(Sec) + L-serine + ATP = L-seryl-tRNA(Sec) + AMP + diphosphate + H(+). The protein operates within aminoacyl-tRNA biosynthesis; selenocysteinyl-tRNA(Sec) biosynthesis; L-seryl-tRNA(Sec) from L-serine and tRNA(Sec): step 1/1. Its function is as follows. Catalyzes the attachment of serine to tRNA(Ser). Is also able to aminoacylate tRNA(Sec) with serine, to form the misacylated tRNA L-seryl-tRNA(Sec), which will be further converted into selenocysteinyl-tRNA(Sec). In Carboxydothermus hydrogenoformans (strain ATCC BAA-161 / DSM 6008 / Z-2901), this protein is Serine--tRNA ligase.